Consider the following 360-residue polypeptide: Phospho-N-acetylmuramoyl-pentapeptide-transferase (360 aa).

A run of 10 helical transmembrane segments spans residues 27-47, 72-92, 94-114, 135-155, 167-187, 199-219, 236-256, 263-283, 289-309, and 337-357; these read GAIA…IKSL, TPTM…LLWA, LSNH…AIGF, LACE…LGTP, GYVV…IVAS, GLAI…AYLV, AGEL…FLWF, IFMG…IAVA, VLAI…VQVV, and QVVV…LSTL.

It belongs to the glycosyltransferase 4 family. MraY subfamily. It depends on Mg(2+) as a cofactor.

It localises to the cell inner membrane. The enzyme catalyses UDP-N-acetyl-alpha-D-muramoyl-L-alanyl-gamma-D-glutamyl-meso-2,6-diaminopimeloyl-D-alanyl-D-alanine + di-trans,octa-cis-undecaprenyl phosphate = di-trans,octa-cis-undecaprenyl diphospho-N-acetyl-alpha-D-muramoyl-L-alanyl-D-glutamyl-meso-2,6-diaminopimeloyl-D-alanyl-D-alanine + UMP. Its pathway is cell wall biogenesis; peptidoglycan biosynthesis. Functionally, catalyzes the initial step of the lipid cycle reactions in the biosynthesis of the cell wall peptidoglycan: transfers peptidoglycan precursor phospho-MurNAc-pentapeptide from UDP-MurNAc-pentapeptide onto the lipid carrier undecaprenyl phosphate, yielding undecaprenyl-pyrophosphoryl-MurNAc-pentapeptide, known as lipid I. This is Phospho-N-acetylmuramoyl-pentapeptide-transferase from Beijerinckia indica subsp. indica (strain ATCC 9039 / DSM 1715 / NCIMB 8712).